A 611-amino-acid chain; its full sequence is Virulence metalloprotease (611 aa).

The signal sequence occupies residues M1–A25. Residues A26–H199 constitute a propeptide that is removed on maturation. H346 contributes to the Zn(2+) binding site. Residue E347 is part of the active site. Zn(2+) is bound by residues H350 and E370. The Proton donor role is filled by H429.

It belongs to the peptidase M4 family. Requires Ca(2+) as cofactor. The cofactor is Zn(2+). Post-translationally, seems to be more extensively processed.

The protein localises to the secreted. In terms of biological role, extracellular zinc metalloprotease involved in the virulence mechanism of V.anguillarum. The polypeptide is Virulence metalloprotease (empA) (Vibrio anguillarum (Listonella anguillarum)).